The chain runs to 396 residues: Acetate kinase (396 aa).

N7 contacts Mg(2+). K14 is an ATP binding site. R91 serves as a coordination point for substrate. Catalysis depends on D148, which acts as the Proton donor/acceptor. Residues 208 to 212 (HLGNG), 283 to 285 (DFR), and 331 to 335 (GLGEN) each bind ATP. Residue E384 participates in Mg(2+) binding.

This sequence belongs to the acetokinase family. As to quaternary structure, homodimer. Mg(2+) is required as a cofactor. The cofactor is Mn(2+).

It is found in the cytoplasm. It catalyses the reaction acetate + ATP = acetyl phosphate + ADP. It functions in the pathway metabolic intermediate biosynthesis; acetyl-CoA biosynthesis; acetyl-CoA from acetate: step 1/2. Functionally, catalyzes the formation of acetyl phosphate from acetate and ATP. Can also catalyze the reverse reaction. The sequence is that of Acetate kinase from Alkaliphilus metalliredigens (strain QYMF).